A 223-amino-acid polypeptide reads, in one-letter code: Cytidylate kinase (223 aa).

10–18 (GPAGSGKSS) serves as a coordination point for ATP.

Belongs to the cytidylate kinase family. Type 1 subfamily.

The protein localises to the cytoplasm. It carries out the reaction CMP + ATP = CDP + ADP. The enzyme catalyses dCMP + ATP = dCDP + ADP. The sequence is that of Cytidylate kinase from Pseudothermotoga lettingae (strain ATCC BAA-301 / DSM 14385 / NBRC 107922 / TMO) (Thermotoga lettingae).